The following is a 443-amino-acid chain: Thymidine phosphorylase (443 aa).

This sequence belongs to the thymidine/pyrimidine-nucleoside phosphorylase family. In terms of assembly, homodimer.

The enzyme catalyses thymidine + phosphate = 2-deoxy-alpha-D-ribose 1-phosphate + thymine. It participates in pyrimidine metabolism; dTMP biosynthesis via salvage pathway; dTMP from thymine: step 1/2. The enzymes which catalyze the reversible phosphorolysis of pyrimidine nucleosides are involved in the degradation of these compounds and in their utilization as carbon and energy sources, or in the rescue of pyrimidine bases for nucleotide synthesis. In Shewanella pealeana (strain ATCC 700345 / ANG-SQ1), this protein is Thymidine phosphorylase.